The primary structure comprises 593 residues: uncharacterized protein (593 aa).

12 helical membrane-spanning segments follow: residues 21 to 41, 60 to 80, 97 to 117, 148 to 168, 204 to 224, 243 to 263, 275 to 295, 328 to 348, 359 to 379, 410 to 430, 457 to 477, and 485 to 505; these read PAVF…SVVY, VGWW…YCGI, FSFW…GLVF, MALT…VVGL, VDVI…GFGI, WMVG…VSGV, MALA…LFLL, WTIF…MFIA, FIGA…TIFG, GLPI…FFFV, VYWA…GGAG, and AAIA…YAMT.

This sequence belongs to the BCCT transporter (TC 2.A.15) family.

It localises to the cell membrane. This is an uncharacterized protein from Mycobacterium tuberculosis (strain CDC 1551 / Oshkosh).